The chain runs to 460 residues: Citrate synthase, peroxisomal (460 aa).

The residue at position 21 (serine 21) is a Phosphoserine. Glycyl lysine isopeptide (Lys-Gly) (interchain with G-Cter in ubiquitin) cross-links involve residues lysine 218 and lysine 239. Residues histidine 293 and histidine 339 contribute to the active site. Residues lysine 354 and lysine 385 each participate in a glycyl lysine isopeptide (Lys-Gly) (interchain with G-Cter in ubiquitin) cross-link. Aspartate 394 is an active-site residue. The short motif at 458–460 (SKL) is the C-terminal peroxisome targeting signal (PTS1) element.

Belongs to the citrate synthase family. Interacts with F-box protein UCC1. In terms of processing, ubiquitinated by the E3 ubiquitin-protein ligase complex SCF(UCC1), which leads to its degradation by the proteasome. Ubiquitination is prevented by oxaloacetate, suggesting the existence of an oxaloacetate-dependent positive feedback loop that stabilizes CIT2.

The protein resides in the cytoplasm. The protein localises to the peroxisome. It carries out the reaction oxaloacetate + acetyl-CoA + H2O = citrate + CoA + H(+). The protein operates within carbohydrate metabolism; tricarboxylic acid cycle; isocitrate from oxaloacetate: step 1/2. Peroxisomal citrate synthase involved in the citrate homeostasis. Catalyzes the condensation of acetyl coenzyme A and oxaloacetate to form citrate. Citrate synthase is the rate-limiting enzyme of the tricarboxylic acid (TCA) cycle. In Saccharomyces cerevisiae (strain ATCC 204508 / S288c) (Baker's yeast), this protein is Citrate synthase, peroxisomal.